The chain runs to 351 residues: UDP-3-O-acylglucosamine N-acyltransferase (351 aa).

The active-site Proton acceptor is the His240.

The protein belongs to the transferase hexapeptide repeat family. LpxD subfamily. In terms of assembly, homotrimer.

The enzyme catalyses a UDP-3-O-[(3R)-3-hydroxyacyl]-alpha-D-glucosamine + a (3R)-hydroxyacyl-[ACP] = a UDP-2-N,3-O-bis[(3R)-3-hydroxyacyl]-alpha-D-glucosamine + holo-[ACP] + H(+). It functions in the pathway bacterial outer membrane biogenesis; LPS lipid A biosynthesis. In terms of biological role, catalyzes the N-acylation of UDP-3-O-acylglucosamine using 3-hydroxyacyl-ACP as the acyl donor. Is involved in the biosynthesis of lipid A, a phosphorylated glycolipid that anchors the lipopolysaccharide to the outer membrane of the cell. This Pseudomonas savastanoi pv. phaseolicola (strain 1448A / Race 6) (Pseudomonas syringae pv. phaseolicola (strain 1448A / Race 6)) protein is UDP-3-O-acylglucosamine N-acyltransferase.